A 1414-amino-acid polypeptide reads, in one-letter code: Phenyloxazoline synthase MbtB (1414 aa).

One can recognise a Carrier 1 domain in the interval 5–78 (TACSEIIRAE…AWSQLVSAGT (74 aa)). Serine 39 bears the O-(pantetheine 4'-phosphoryl)serine mark. Positions 96–394 (EGEPFPLAPM…SSLLLDVDLT (299 aa)) are condensation/cyclization. The adenylation stretch occupies residues 579–975 (SYAQLRDQAS…RLPGVHAAAA (397 aa)). A Carrier 2 domain is found at 1057–1135 (APRTVLQRAL…ALAQLLTGRE (79 aa)). Serine 1094 carries the post-translational modification O-(pantetheine 4'-phosphoryl)serine. Residues 1188–1413 (GAVLVFPHAG…AVARMVSADV (226 aa)) form a thioesterase region.

This sequence belongs to the ATP-dependent AMP-binding enzyme family. MbtB subfamily. Pantetheine 4'-phosphate is required as a cofactor. Post-translationally, 4'-phosphopantetheine is transferred from CoA to a specific serine in each of the two carrier protein domains, leading to their activation from apo to holo forms.

It participates in siderophore biosynthesis; mycobactin biosynthesis. Its function is as follows. Involved in the initial steps of the mycobactin biosynthetic pathway. Putatively couples activated salicylic acid with serine or threonine and cyclizes this precursor to the hydroxyphenyloxazoline ring system present in this class of siderophores. The polypeptide is Phenyloxazoline synthase MbtB (mbtB) (Mycobacterium bovis (strain ATCC BAA-935 / AF2122/97)).